A 500-amino-acid polypeptide reads, in one-letter code: Plasma protease C1 inhibitor (500 aa).

An N-terminal signal peptide occupies residues 1–22; it reads MASRLTLLTLLLLLLAGDRASS. The segment covering 20–31 has biased composition (low complexity); sequence ASSNPNATSSSS. Residues 20–43 are disordered; sequence ASSNPNATSSSSQDPESLQDRGEG. N-linked (GlcNAc...) (complex) asparagine glycosylation occurs at N25. 2 O-linked (GalNAc...) threonine glycosylation sites follow: T47 and T48. The O-linked (GalNAc...) serine glycan is linked to S64. The interval 65–118 is disordered; it reads LPTTNSTTNSATKITANTTDEPTTQPTTEPTTQPTIQPTQPTTQLPTDSPTQPT. A compositionally biased stretch (low complexity) spans 67-118; it reads TTNSTTNSATKITANTTDEPTTQPTTEPTTQPTIQPTQPTTQLPTDSPTQPT. N-linked (GlcNAc...) asparagine glycosylation is present at N69. The O-linked (GalNAc...) threonine glycan is linked to T71. N-linked (GlcNAc...) asparagine glycosylation is present at N81. O-linked (GalNAc...) threonine glycosylation is found at T83, T88, T92, and T96. 7 repeat units span residues 85–88, 89–92, 93–96, 97–100, 101–104, 105–108, and 116–119. The tract at residues 85-119 is 7 X 4 AA tandem repeats of [QE]-P-T-[TQ]; that stretch reads EPTTQPTTEPTTQPTIQPTQPTTQLPTDSPTQPTT. 2 disulfide bridges follow: C123–C428 and C130–C205. 2 N-linked (GlcNAc...) (complex) asparagine glycosylation sites follow: N238 and N253. N-linked (GlcNAc...) asparagine; in variant TA glycosylation is present at N272. Residue N352 is glycosylated (N-linked (GlcNAc...) (complex) asparagine).

This sequence belongs to the serpin family. As to quaternary structure, interacts with MASP1. (Microbial infection) Binds to E.coli stcE which allows localization of SERPING1 to cell membranes thus protecting the bacteria against complement-mediated lysis. Highly glycosylated (49%) with N- and O-glycosylation. O-glycosylated with core 1 or possibly core 8 glycans. N-glycan heterogeneity at Asn-25: Hex5HexNAc4 (minor), dHex1Hex5HexNAc4 (minor), Hex6HexNAc5 (major) and dHex1Hex6HexNAc5 (minor). Post-translationally, cleaved by C1S in vitro. In terms of processing, (Microbial infection) Can be proteolytically cleaved by E.coli stcE.

The protein resides in the secreted. Functionally, serine protease inhibitor, which acrs as a regulator of the classical complement pathway. Forms a proteolytically inactive stoichiometric complex with the C1r or C1s proteases. May also regulate blood coagulation, fibrinolysis and the generation of kinins. Very efficient inhibitor of FXIIa. Inhibits chymotrypsin and kallikrein. The chain is Plasma protease C1 inhibitor (SERPING1) from Homo sapiens (Human).